A 506-amino-acid chain; its full sequence is Probable lipid II flippase MurJ (506 aa).

The next 13 membrane-spanning stretches (helical) occupy residues 4-24, 86-106, 127-147, 153-173, 181-201, 232-252, 263-283, 308-328, 345-365, 377-397, 405-425, 436-456, and 474-494; these read YVVS…MGFV, TVIT…IIFA, VFGY…FVSV, IFFI…LSIF, IYSA…IPFA, IFGF…ASTL, AVVY…TVIF, ILLL…DYIL, TASV…FGFF, TPFY…VFGI, LALA…FIIL, ILFV…IYFF, and LMAA…VLGI.

This sequence belongs to the MurJ/MviN family.

The protein resides in the cell inner membrane. It participates in cell wall biogenesis; peptidoglycan biosynthesis. Its function is as follows. Involved in peptidoglycan biosynthesis. Transports lipid-linked peptidoglycan precursors from the inner to the outer leaflet of the cytoplasmic membrane. The polypeptide is Probable lipid II flippase MurJ (Borreliella burgdorferi (strain ATCC 35210 / DSM 4680 / CIP 102532 / B31) (Borrelia burgdorferi)).